The following is a 125-amino-acid chain: U11-myrmicitoxin-Ta1a (125 aa).

The first 21 residues, 1–21 (MKTVIFILGFAFVAILIPTNG), serve as a signal peptide directing secretion. The propeptide occupies 22–91 (ESMADADAMA…RAMAAAYAAA (70 aa)). Cys101 and Cys124 are disulfide-bonded.

It belongs to the formicidae venom precursor-01 superfamily. In terms of tissue distribution, expressed by the venom gland.

It is found in the secreted. The protein localises to the target cell membrane. Functionally, neurotoxin that causes irreversible rapid flaccid paralysis in blowflies and honeybees upon intrathoracic injection. Causes a quick and irreversible cytolytic effect (at 10 uM) indicating it possibly acts as a pore-forming peptide. Shows only weak effect on aphids (A.pisum) at high doses 24 hours post intrathoracic injection. In vitro, is not cytotoxic on the dipteran S2 Drosophila embryonic cell line. The chain is U11-myrmicitoxin-Ta1a from Tetramorium africanum (Fierce ant).